We begin with the raw amino-acid sequence, 702 residues long: Polyribonucleotide nucleotidyltransferase (702 aa).

2 residues coordinate Mg(2+): Asp485 and Asp491. Residues Pro552–Ile612 enclose the KH domain. The S1 motif domain occupies Gly622 to Lys690.

It belongs to the polyribonucleotide nucleotidyltransferase family. It depends on Mg(2+) as a cofactor.

The protein resides in the cytoplasm. It catalyses the reaction RNA(n+1) + phosphate = RNA(n) + a ribonucleoside 5'-diphosphate. Functionally, involved in mRNA degradation. Catalyzes the phosphorolysis of single-stranded polyribonucleotides processively in the 3'- to 5'-direction. This Clostridium botulinum (strain Loch Maree / Type A3) protein is Polyribonucleotide nucleotidyltransferase.